The following is a 29-amino-acid chain: Cyclotide mden-A (29 aa).

Positions 1–29 form a cross-link, cyclopeptide (Gly-Asn); that stretch reads GIPTCGETCTLGTCNTPGCTCSWPICTKN. Intrachain disulfides connect C5/C19, C9/C21, and C14/C26.

It belongs to the cyclotide family. Moebius subfamily. This is a cyclic peptide.

In terms of biological role, probably participates in a plant defense mechanism. The sequence is that of Cyclotide mden-A from Melicytus dentatus (Tree violet).